The primary structure comprises 263 residues: uncharacterized protein (263 aa).

Belongs to the AtsA family.

It localises to the plastid. The protein resides in the chloroplast. This is an uncharacterized protein from Porphyra purpurea (Red seaweed).